A 667-amino-acid polypeptide reads, in one-letter code: Homeobox protein 3 (667 aa).

Disordered regions lie at residues 44-108, 179-232, 249-268, and 331-418; these read FFQP…NSSI, NNNN…TVYN, NNNN…VNNN, and STNK…YQKQ. Positions 52–63 are enriched in pro residues; that stretch reads LPPPTNQQPQPQ. The span at 75 to 96 shows a compositional bias: polar residues; it reads CNSSFENSPQQPTSPLLISSQT. Low complexity predominate over residues 97–108; sequence SYPSDLSSNSSI. A compositionally biased stretch (basic residues) spans 334 to 343; the sequence is KRMKISHHSH. Positions 344 to 379 are enriched in low complexity; that stretch reads SLSNNNENSLSQPYFNNNNNNNNENENVYNIVNEQN. The span at 380–390 shows a compositional bias: polar residues; the sequence is PTFNPNQSNTH. Residues 386 to 454 adopt a coiled-coil conformation; sequence QSNTHQQQEE…ENENVICSEF (69 aa). The segment at residues 602–664 is a DNA-binding region (homeobox); the sequence is EFKSRRILSE…NKRMRDKSNK (63 aa).

It is found in the nucleus. Functionally, putative transcription factor. The sequence is that of Homeobox protein 3 (hbx3) from Dictyostelium discoideum (Social amoeba).